The primary structure comprises 251 residues: Zinc import ATP-binding protein ZnuC (251 aa).

The 216-residue stretch at 5 to 220 folds into the ABC transporter domain; sequence VSLENVSVSF…PEFISMFGPR (216 aa). 37–44 lines the ATP pocket; the sequence is GPNGAGKS.

It belongs to the ABC transporter superfamily. Zinc importer (TC 3.A.1.15.5) family. As to quaternary structure, the complex is composed of two ATP-binding proteins (ZnuC), two transmembrane proteins (ZnuB) and a solute-binding protein (ZnuA).

Its subcellular location is the cell inner membrane. The catalysed reaction is Zn(2+)(out) + ATP(in) + H2O(in) = Zn(2+)(in) + ADP(in) + phosphate(in) + H(+)(in). In terms of biological role, part of the ABC transporter complex ZnuABC involved in zinc import. Responsible for energy coupling to the transport system. The protein is Zinc import ATP-binding protein ZnuC of Escherichia coli O157:H7.